A 279-amino-acid polypeptide reads, in one-letter code: Energy-coupling factor transporter ATP-binding protein EcfA (279 aa).

One can recognise an ABC transporter domain in the interval 5 to 240; it reads IELEKINYKY…GPELIDLGLD (236 aa). Residue 40-47 participates in ATP binding; sequence GHNGSGKS.

Belongs to the ABC transporter superfamily. Energy-coupling factor EcfA family. Forms a stable energy-coupling factor (ECF) transporter complex composed of 2 membrane-embedded substrate-binding proteins (S component), 2 ATP-binding proteins (A component) and 2 transmembrane proteins (T component).

The protein localises to the cell membrane. Its function is as follows. ATP-binding (A) component of a common energy-coupling factor (ECF) ABC-transporter complex. Unlike classic ABC transporters this ECF transporter provides the energy necessary to transport a number of different substrates. This chain is Energy-coupling factor transporter ATP-binding protein EcfA, found in Enterococcus faecium (Streptococcus faecium).